The sequence spans 427 residues: Glutamate-1-semialdehyde 2,1-aminomutase (427 aa).

Residue Lys-265 is modified to N6-(pyridoxal phosphate)lysine.

It belongs to the class-III pyridoxal-phosphate-dependent aminotransferase family. HemL subfamily. In terms of assembly, homodimer. Pyridoxal 5'-phosphate is required as a cofactor.

The protein localises to the cytoplasm. It carries out the reaction (S)-4-amino-5-oxopentanoate = 5-aminolevulinate. It participates in porphyrin-containing compound metabolism; protoporphyrin-IX biosynthesis; 5-aminolevulinate from L-glutamyl-tRNA(Glu): step 2/2. In Burkholderia thailandensis (strain ATCC 700388 / DSM 13276 / CCUG 48851 / CIP 106301 / E264), this protein is Glutamate-1-semialdehyde 2,1-aminomutase.